Reading from the N-terminus, the 366-residue chain is Histidinol-phosphate aminotransferase (366 aa).

N6-(pyridoxal phosphate)lysine is present on lysine 222.

The protein belongs to the class-II pyridoxal-phosphate-dependent aminotransferase family. Histidinol-phosphate aminotransferase subfamily. In terms of assembly, homodimer. The cofactor is pyridoxal 5'-phosphate.

The enzyme catalyses L-histidinol phosphate + 2-oxoglutarate = 3-(imidazol-4-yl)-2-oxopropyl phosphate + L-glutamate. It participates in amino-acid biosynthesis; L-histidine biosynthesis; L-histidine from 5-phospho-alpha-D-ribose 1-diphosphate: step 7/9. The protein is Histidinol-phosphate aminotransferase of Lysinibacillus sphaericus (strain C3-41).